We begin with the raw amino-acid sequence, 181 residues long: Large ribosomal subunit protein uL6 (181 aa).

This sequence belongs to the universal ribosomal protein uL6 family. As to quaternary structure, part of the 50S ribosomal subunit.

In terms of biological role, this protein binds to the 23S rRNA, and is important in its secondary structure. It is located near the subunit interface in the base of the L7/L12 stalk, and near the tRNA binding site of the peptidyltransferase center. In Lawsonia intracellularis (strain PHE/MN1-00), this protein is Large ribosomal subunit protein uL6.